A 455-amino-acid polypeptide reads, in one-letter code: MSDSGDAQPQDGGNSSSSRGKSPSVGNRVTVVLGAQWGDEGKGKVVDLLAQDADMVCRCQGGNNAGHTVVVDSVEYDFHLLPSGIINPKVTAFIGNGVVIHLPGLFEEAEKNVRKGKGLEGWESRLIISDRAHIVFDFHQAVDGVQEQERQQQAGKNLGTTKKGIGPVYSAKAARSGLRICDLLADFQEFSERFKHLASQYKSMYPSLEIDVDGELEKLKSYVDRIKPMVRDGVFFMYEALHGDPKRILVEGANAALLDIDFGTYPFVTSSNCTVGGVCTGLGMPPQNVGEVYGVVKAYTTRVGIGAFPTEQSNETGELLQTRGKEVGVTTGRKRRCGWLDLVLIKYAHMINGFTALALTKLDILDVLPEIKVGVAYKVNGETIPHFPANQEVLQKVEVEYETLPGWSTDTSAVRTFEELPENAKKYVCFIEDRLGVPVKWIGVGKSRESMIQLF.

The interval 1 to 25 is disordered; sequence MSDSGDAQPQDGGNSSSSRGKSPSV. Positions 12-25 are enriched in low complexity; the sequence is GGNSSSSRGKSPSV. GTP-binding positions include 38-44 and 66-68; these read GDEGKGK and GHT. Asp39 acts as the Proton acceptor in catalysis. Asp39 and Gly66 together coordinate Mg(2+). Residue Asp39 coordinates substrate. IMP contacts are provided by residues 39 to 42, 64 to 67, Thr161, Arg175, Asn254, Thr269, and Arg333; these read DEGK and NAGH. The active-site Proton donor is His67. Position 329–335 (329–335) interacts with substrate; it reads VTTGRKR. Residues Arg335, 361-363, and 443-446 each bind GTP; these read KLD and GVGK.

This sequence belongs to the adenylosuccinate synthetase family. In terms of assembly, homodimer. Mg(2+) serves as cofactor.

The protein resides in the cytoplasm. It is found in the mitochondrion. It carries out the reaction IMP + L-aspartate + GTP = N(6)-(1,2-dicarboxyethyl)-AMP + GDP + phosphate + 2 H(+). Its pathway is purine metabolism; AMP biosynthesis via de novo pathway; AMP from IMP: step 1/2. Its activity is regulated as follows. Inhibited competitively by AMP and IMP and non-competitively by fructose 1,6-bisphosphate. In terms of biological role, plays an important role in the de novo pathway and in the salvage pathway of purine nucleotide biosynthesis. Catalyzes the first committed step in the biosynthesis of AMP from IMP. The polypeptide is Adenylosuccinate synthetase isozyme 2 (adss2) (Danio rerio (Zebrafish)).